The primary structure comprises 243 residues: tRNA (guanine-N(1)-)-methyltransferase (243 aa).

S-adenosyl-L-methionine contacts are provided by residues Gly-108 and 127-132 (LGDFVL).

Belongs to the RNA methyltransferase TrmD family. Homodimer.

Its subcellular location is the cytoplasm. It catalyses the reaction guanosine(37) in tRNA + S-adenosyl-L-methionine = N(1)-methylguanosine(37) in tRNA + S-adenosyl-L-homocysteine + H(+). Specifically methylates guanosine-37 in various tRNAs. In Streptococcus pyogenes serotype M2 (strain MGAS10270), this protein is tRNA (guanine-N(1)-)-methyltransferase.